Consider the following 157-residue polypeptide: UPF0127 protein TK1120 (157 aa).

The protein belongs to the UPF0127 family.

This Thermococcus kodakarensis (strain ATCC BAA-918 / JCM 12380 / KOD1) (Pyrococcus kodakaraensis (strain KOD1)) protein is UPF0127 protein TK1120.